The sequence spans 362 residues: Chorismate synthase (362 aa).

Arg-47 is an NADP(+) binding site. FMN is bound by residues 124-126, Gly-286, 301-305, and Arg-327; these read RAS and KPTAT.

Belongs to the chorismate synthase family. As to quaternary structure, homotetramer. FMNH2 serves as cofactor.

The catalysed reaction is 5-O-(1-carboxyvinyl)-3-phosphoshikimate = chorismate + phosphate. Its pathway is metabolic intermediate biosynthesis; chorismate biosynthesis; chorismate from D-erythrose 4-phosphate and phosphoenolpyruvate: step 7/7. Its function is as follows. Catalyzes the anti-1,4-elimination of the C-3 phosphate and the C-6 proR hydrogen from 5-enolpyruvylshikimate-3-phosphate (EPSP) to yield chorismate, which is the branch point compound that serves as the starting substrate for the three terminal pathways of aromatic amino acid biosynthesis. This reaction introduces a second double bond into the aromatic ring system. This chain is Chorismate synthase, found in Prochlorococcus marinus (strain MIT 9303).